The following is a 306-amino-acid chain: MPSVINTGHHHFSISNIFANWRAYYDITKPKVVALLVLTALVGMSLSVPGALPWQRLIPAMLGIGLLSSAAAAINHIVDEKIDTVMGRTHNRPLPAGKISVTNAIVFATSIALLGFIILYALVNPLTAFLTLAGLVGYSFVYTMYLKRATPQNITIGGLAGAIPPLLGWTAMTNEVVPNALLLVLIIFTWTPPHFWALAIHRKNDYAKVNIPMLPVTHGVSFTKTQILLYTVLLFVVCLLPYLVGMSNWLYLIGACSLNLIFFGYAWQLKFNAKEGTAMATFKFSIIHLMLLFIILLLDHYWLPMG.

9 consecutive transmembrane segments (helical) span residues 32–52, 58–78, 103–123, 126–146, 153–173, 180–200, 227–247, 249–269, and 278–298; these read VVAL…PGAL, IPAM…NHIV, NAIV…YALV, LTAF…TMYL, NITI…TAMT, ALLL…ALAI, ILLY…VGMS, WLYL…AWQL, and AMAT…ILLL.

The protein belongs to the UbiA prenyltransferase family. Protoheme IX farnesyltransferase subfamily.

It localises to the cell inner membrane. The catalysed reaction is heme b + (2E,6E)-farnesyl diphosphate + H2O = Fe(II)-heme o + diphosphate. It participates in porphyrin-containing compound metabolism; heme O biosynthesis; heme O from protoheme: step 1/1. Converts heme B (protoheme IX) to heme O by substitution of the vinyl group on carbon 2 of heme B porphyrin ring with a hydroxyethyl farnesyl side group. This chain is Protoheme IX farnesyltransferase, found in Colwellia psychrerythraea (strain 34H / ATCC BAA-681) (Vibrio psychroerythus).